We begin with the raw amino-acid sequence, 124 residues long: Small ribosomal subunit protein uS12 (124 aa).

D90 bears the 3-methylthioaspartic acid mark.

The protein belongs to the universal ribosomal protein uS12 family. Part of the 30S ribosomal subunit. Contacts proteins S8 and S17. May interact with IF1 in the 30S initiation complex.

With S4 and S5 plays an important role in translational accuracy. In terms of biological role, interacts with and stabilizes bases of the 16S rRNA that are involved in tRNA selection in the A site and with the mRNA backbone. Located at the interface of the 30S and 50S subunits, it traverses the body of the 30S subunit contacting proteins on the other side and probably holding the rRNA structure together. The combined cluster of proteins S8, S12 and S17 appears to hold together the shoulder and platform of the 30S subunit. The chain is Small ribosomal subunit protein uS12 from Wolbachia pipientis wMel.